Consider the following 1657-residue polypeptide: A disintegrin and metalloproteinase with thrombospondin motifs 7 (1657 aa).

The first 20 residues, 1 to 20, serve as a signal peptide directing secretion; the sequence is MHRGPSLLLILCALASRVLG. Positions 21-220 are excised as a propeptide; it reads PASGLVTEGR…QQQQKRRQQR (200 aa). N84 carries an N-linked (GlcNAc...) asparagine glycan. Residues 165 to 221 are disordered; the sequence is PGHAQPHVVYKHQGSRKQAQQGDSRPSGTCGMQVPPDLEQQREHWEQQQQKRRQQRS. The span at 180–191 shows a compositional bias: polar residues; sequence RKQAQQGDSRPS. The Cysteine switch signature appears at 192-199; that stretch reads GTCGMQVP. C194 is a binding site for Zn(2+). A Peptidase M12B domain is found at 226–437; it reads KWVETLVVAD…GWGLCLDDRP (212 aa). Intrachain disulfides connect C302-C356, C331-C338, C350-C432, C389-C416, C459-C482, C470-C488, C477-C507, C501-C512, C535-C572, C539-C577, and C550-C562. H372 provides a ligand contact to Zn(2+). Residue E373 is part of the active site. 2 residues coordinate Zn(2+): H376 and H382. Residues 447-522 form the Disintegrin domain; the sequence is VLPGVLYDVN…VPEGFQPEAV (76 aa). The region spanning 523-578 is the TSP type-1 1 domain; sequence DGGWSGWSAWSDCSRSCGVGVRSSERQCTQPVPKNRGKYCVGERKRSQLCNLPACP. N622 is a glycosylation site (N-linked (GlcNAc...) asparagine). The interval 683–794 is spacer; sequence QTVSRTFKET…PGVHYQYTIQ (112 aa). 3 TSP type-1 domains span residues 804-863, 864-923, and 925-978; these read PEFS…EPCP, PRWW…NRHV, and CPST…QPCQ. 5 disordered regions span residues 1009 to 1034, 1073 to 1127, 1140 to 1237, 1283 to 1304, and 1317 to 1384; these read LAPR…EELD, GGWT…GLEQ, EDTP…DVVE, GRDS…SSQH, and TVPT…ARNA. The segment covering 1211-1224 has biased composition (pro residues); the sequence is PQSPIPTQPSPPSI. 2 stretches are compositionally biased toward polar residues: residues 1293-1304 and 1327-1342; these read PTFSSPELSSQH and PSGQ…TQSP. TSP type-1 domains follow at residues 1366-1414, 1417-1477, 1479-1522, and 1524-1584; these read QPSL…SGND, CTLA…CQPG, TKPP…PEPG, and CEES…LCSH. Residues 1587–1627 enclose the PLAC domain; it reads WPESSRPCATEDCELVEPPRCERDRLSFNFCETLRLLGRCQ.

As to quaternary structure, interacts with COMP. The cofactor is Zn(2+). In terms of processing, N-glycosylated. Can be O-fucosylated by POFUT2 on a serine or a threonine residue found within the consensus sequence C1-X(2)-(S/T)-C2-G of the TSP type-1 repeat domains where C1 and C2 are the first and second cysteine residue of the repeat, respectively. Fucosylated repeats can then be further glycosylated by the addition of a beta-1,3-glucose residue by the glucosyltransferase, B3GALTL. Fucosylation mediates the efficient secretion of ADAMTS family members. Can also be C-glycosylated with one or two mannose molecules on tryptophan residues within the consensus sequence W-X-X-W of the TPRs. N- and C-glycosylations can also facilitate secretion. O-glycosylated proteoglycan; contains chondroitin sulfate. Post-translationally, may be cleaved by a furin endopeptidase. The precursor is sequentially processed.

The protein localises to the secreted. The protein resides in the extracellular space. Its subcellular location is the extracellular matrix. Its function is as follows. Metalloprotease. Was previously shown to degrade COMP. However, a later study found no activity against COMP. In Mus musculus (Mouse), this protein is A disintegrin and metalloproteinase with thrombospondin motifs 7 (Adamts7).